A 190-amino-acid polypeptide reads, in one-letter code: MPRAFLVRSRRPQPPNWGHLPDQLRGDAYIPDCSSLGGPPAQQSSSVRDPWTAQPTQGNLTSAPRGPGTLGCPLCPKAFPLQRMLTRHLKCHSPVRRHLCRCCGKGFHDAFDLKRHMRTHTGIRPFRCSACGKAFTQRCSLEAHLAKVHGQPASYAYRERREKLHVCEDCGFTSSRPDTYAQHRALHRAA.

Disordered regions lie at residues 1–21 (MPRA…GHLP) and 35–65 (SLGG…SAPR). Over residues 41–62 (AQQSSSVRDPWTAQPTQGNLTS) the composition is skewed to polar residues. C2H2-type zinc fingers lie at residues 70–92 (LGCP…LKCH), 98–120 (HLCR…MRTH), 126–149 (FRCS…AKVH), and 165–187 (HVCE…RALH).

Belongs to the krueppel C2H2-type zinc-finger protein family.

Its subcellular location is the nucleus. In terms of biological role, may act as a transcription regulator. This Homo sapiens (Human) protein is Putative transcription factor ovo-like protein 3 (OVOL3).